We begin with the raw amino-acid sequence, 137 residues long: Nucleoside diphosphate kinase (137 aa).

6 residues coordinate ATP: K9, F57, R85, T91, R102, and N112. The active-site Pros-phosphohistidine intermediate is the H115.

It belongs to the NDK family. In terms of assembly, homotetramer. Mg(2+) serves as cofactor.

It is found in the cytoplasm. The enzyme catalyses a 2'-deoxyribonucleoside 5'-diphosphate + ATP = a 2'-deoxyribonucleoside 5'-triphosphate + ADP. It carries out the reaction a ribonucleoside 5'-diphosphate + ATP = a ribonucleoside 5'-triphosphate + ADP. Functionally, major role in the synthesis of nucleoside triphosphates other than ATP. The ATP gamma phosphate is transferred to the NDP beta phosphate via a ping-pong mechanism, using a phosphorylated active-site intermediate. This Geotalea uraniireducens (strain Rf4) (Geobacter uraniireducens) protein is Nucleoside diphosphate kinase.